A 718-amino-acid polypeptide reads, in one-letter code: U-box domain-containing protein 5 (718 aa).

In terms of domain architecture, U-box spans 218-292 (TLPEKFKCTL…SEWCAKNGLD (75 aa)). ARM repeat units lie at residues 493–532 (PHGP…NLSS), 534–571 (MEIC…NLCS), and 573–613 (EKGR…QLCV). Residues 662–704 (KEEEEEVSSRPEGRTTASPTSQVVTPVTHPEPVKITPSPKKSG) are disordered. The segment covering 676–686 (TTASPTSQVVT) has biased composition (polar residues).

The enzyme catalyses S-ubiquitinyl-[E2 ubiquitin-conjugating enzyme]-L-cysteine + [acceptor protein]-L-lysine = [E2 ubiquitin-conjugating enzyme]-L-cysteine + N(6)-ubiquitinyl-[acceptor protein]-L-lysine.. It functions in the pathway protein modification; protein ubiquitination. Functionally, functions as an E3 ubiquitin ligase. The sequence is that of U-box domain-containing protein 5 (PUB5) from Arabidopsis thaliana (Mouse-ear cress).